A 346-amino-acid chain; its full sequence is MIKISIDAMGGDFGPEVVIPGAAKAFERHPDIRFIFFGLPAQVEPVLARYPKLKEASEFRASEVAIGMDDKPSQALRAGRGKSSMWQAIEAVKTGDADACVSAGNTGALMAMSKFCLRMMSDVERPAIAGIWPTLRGESIVLDIGATIGADARQLVDYAVMGAGMARALFEVRKPTVGLLNVGTEEVKGLDEIKEAGQILRDTPLDGLEYSGFVEGNDIGKGTVDVVVTEGFTGNIALKTAEGTARQMAELLRQAMSRTLLAKIGYVFAKGAFDRLREKMDPNKVNGGVFLGLSGIVIKSHGGANAEGFCSAVEVGYDMVRNRLLEKIEADLAHFHHSHSHVSSKA.

This sequence belongs to the PlsX family. In terms of assembly, homodimer. Probably interacts with PlsY.

The protein localises to the cytoplasm. It carries out the reaction a fatty acyl-[ACP] + phosphate = an acyl phosphate + holo-[ACP]. The protein operates within lipid metabolism; phospholipid metabolism. In terms of biological role, catalyzes the reversible formation of acyl-phosphate (acyl-PO(4)) from acyl-[acyl-carrier-protein] (acyl-ACP). This enzyme utilizes acyl-ACP as fatty acyl donor, but not acyl-CoA. This Brucella abortus (strain S19) protein is Phosphate acyltransferase.